Here is a 377-residue protein sequence, read N- to C-terminus: Phosphoserine aminotransferase (377 aa).

Arg-43 is a binding site for L-glutamate. Pyridoxal 5'-phosphate-binding residues include Trp-105, Thr-164, Asp-189, and Gln-212. Position 213 is an N6-(pyridoxal phosphate)lysine (Lys-213). 254–255 (NT) serves as a coordination point for pyridoxal 5'-phosphate.

This sequence belongs to the class-V pyridoxal-phosphate-dependent aminotransferase family. SerC subfamily. Homodimer. The cofactor is pyridoxal 5'-phosphate.

It localises to the cytoplasm. It catalyses the reaction O-phospho-L-serine + 2-oxoglutarate = 3-phosphooxypyruvate + L-glutamate. It carries out the reaction 4-(phosphooxy)-L-threonine + 2-oxoglutarate = (R)-3-hydroxy-2-oxo-4-phosphooxybutanoate + L-glutamate. It functions in the pathway amino-acid biosynthesis; L-serine biosynthesis; L-serine from 3-phospho-D-glycerate: step 2/3. It participates in cofactor biosynthesis; pyridoxine 5'-phosphate biosynthesis; pyridoxine 5'-phosphate from D-erythrose 4-phosphate: step 3/5. Catalyzes the reversible conversion of 3-phosphohydroxypyruvate to phosphoserine and of 3-hydroxy-2-oxo-4-phosphonooxybutanoate to phosphohydroxythreonine. This is Phosphoserine aminotransferase from Bordetella pertussis (strain Tohama I / ATCC BAA-589 / NCTC 13251).